The following is a 122-amino-acid chain: Large ribosomal subunit protein uL14 (122 aa).

Belongs to the universal ribosomal protein uL14 family. Part of the 50S ribosomal subunit. Forms a cluster with proteins L3 and L19. In the 70S ribosome, L14 and L19 interact and together make contacts with the 16S rRNA in bridges B5 and B8.

Functionally, binds to 23S rRNA. Forms part of two intersubunit bridges in the 70S ribosome. The chain is Large ribosomal subunit protein uL14 from Shewanella denitrificans (strain OS217 / ATCC BAA-1090 / DSM 15013).